Here is a 495-residue protein sequence, read N- to C-terminus: Membrane-bound lytic murein transglycosylase F (495 aa).

The signal sequence occupies residues 1 to 30 (MSRIRHHRFIQSCLVISTLLITLTGCQVES). The non-LT domain stretch occupies residues 31–270 (EPKTKLEQIR…LLEEKYFGHV (240 aa)). The segment at 272 to 495 (SFDYVDTRAF…SVSQAIETKK (224 aa)) is LT domain. Glu315 is a catalytic residue.

It in the N-terminal section; belongs to the bacterial solute-binding protein 3 family. The protein in the C-terminal section; belongs to the transglycosylase Slt family.

The protein resides in the cell outer membrane. The catalysed reaction is Exolytic cleavage of the (1-&gt;4)-beta-glycosidic linkage between N-acetylmuramic acid (MurNAc) and N-acetylglucosamine (GlcNAc) residues in peptidoglycan, from either the reducing or the non-reducing ends of the peptidoglycan chains, with concomitant formation of a 1,6-anhydrobond in the MurNAc residue.. Murein-degrading enzyme that degrades murein glycan strands and insoluble, high-molecular weight murein sacculi, with the concomitant formation of a 1,6-anhydromuramoyl product. Lytic transglycosylases (LTs) play an integral role in the metabolism of the peptidoglycan (PG) sacculus. Their lytic action creates space within the PG sacculus to allow for its expansion as well as for the insertion of various structures such as secretion systems and flagella. This chain is Membrane-bound lytic murein transglycosylase F, found in Aliivibrio fischeri (strain ATCC 700601 / ES114) (Vibrio fischeri).